The sequence spans 347 residues: Coproporphyrinogen-III oxidase, aerobic 2 (347 aa).

Positions Met-1–Arg-31 are disordered. A compositionally biased stretch (polar residues) spans Asn-7–Arg-31. Positions Val-75–Gln-84 are important for dimerization. Ser-119 provides a ligand contact to substrate. His-133 functions as the Proton donor in the catalytic mechanism. Substrate is bound by residues Asn-135–Arg-137 and Lys-305–Ser-310. Positions Tyr-287–Glu-322 are important for dimerization.

Belongs to the aerobic coproporphyrinogen-III oxidase family. In terms of assembly, homodimer.

The protein resides in the cytoplasm. It catalyses the reaction coproporphyrinogen III + O2 + 2 H(+) = protoporphyrinogen IX + 2 CO2 + 2 H2O. It participates in porphyrin-containing compound metabolism; protoporphyrin-IX biosynthesis; protoporphyrinogen-IX from coproporphyrinogen-III (O2 route): step 1/1. In terms of biological role, key enzyme in heme biosynthesis. Catalyzes the oxidative decarboxylation of propionic acid side chains of rings A and B of coproporphyrinogen III. The chain is Coproporphyrinogen-III oxidase, aerobic 2 from Nostoc sp. (strain PCC 7120 / SAG 25.82 / UTEX 2576).